The sequence spans 950 residues: Valine--tRNA ligase (950 aa).

Residues 40–50 (PNVTGSLHMGH) carry the 'HIGH' region motif. The 'KMSKS' region signature appears at 551–555 (KMSKS). An ATP-binding site is contributed by lysine 554. Residues 881 to 950 (LIDKSAELGR…AEQRQKIAAL (70 aa)) adopt a coiled-coil conformation.

Belongs to the class-I aminoacyl-tRNA synthetase family. ValS type 1 subfamily. As to quaternary structure, monomer.

It is found in the cytoplasm. The catalysed reaction is tRNA(Val) + L-valine + ATP = L-valyl-tRNA(Val) + AMP + diphosphate. Catalyzes the attachment of valine to tRNA(Val). As ValRS can inadvertently accommodate and process structurally similar amino acids such as threonine, to avoid such errors, it has a 'posttransfer' editing activity that hydrolyzes mischarged Thr-tRNA(Val) in a tRNA-dependent manner. The protein is Valine--tRNA ligase of Pseudomonas aeruginosa (strain ATCC 15692 / DSM 22644 / CIP 104116 / JCM 14847 / LMG 12228 / 1C / PRS 101 / PAO1).